We begin with the raw amino-acid sequence, 523 residues long: Arabinose import ATP-binding protein AraG (523 aa).

ABC transporter domains lie at 20–255 (LAFR…MVGR) and 268–511 (IGSE…MLRT). 52–59 (GENGAGKS) serves as a coordination point for ATP.

This sequence belongs to the ABC transporter superfamily. Arabinose importer (TC 3.A.1.2.2) family. As to quaternary structure, the complex is composed of two ATP-binding proteins (AraG), two transmembrane proteins (AraH) and a solute-binding protein (AraF).

It localises to the cell inner membrane. The catalysed reaction is L-arabinose(out) + ATP + H2O = L-arabinose(in) + ADP + phosphate + H(+). Part of the ABC transporter complex AraFGH involved in arabinose import. Responsible for energy coupling to the transport system. The sequence is that of Arabinose import ATP-binding protein AraG from Yersinia pestis bv. Antiqua (strain Antiqua).